The sequence spans 592 residues: Endoribonuclease Arlr (592 aa).

Positions 1–24 are cleaved as a signal peptide; that stretch reads MRCLALSAVFLCLTLAGHFHLSDA. The disordered stretch occupies residues 83-329; sequence PTAANKPPPL…FQSSGNSVAT (247 aa). The segment covering 109–120 has biased composition (polar residues); the sequence is PGSSPFGASQNP. Low complexity-rich tracts occupy residues 134 to 144 and 188 to 209; these read PSHPSQPSQPS and GISSTTSTTTTAKPITSTTGKT. Composition is skewed to pro residues over residues 234–249 and 258–267; these read LPAPKTPPGSPTPTPG and LPTPQHPVHP. The segment covering 268-294 has biased composition (low complexity); it reads PTKATSAATPTPTPTPSFSSSVTPTPA. The region spanning 329–592 is the EndoU domain; sequence TDDEIRQLTE…NLIGSAYPEI (264 aa). Catalysis depends on residues His-473, His-488, and Lys-531.

The protein belongs to the ENDOU family. In terms of assembly, monomer. The cofactor is Mn(2+). As to expression, predominantly expressed in head. Expressed in fat body cells.

The protein localises to the endoplasmic reticulum lumen. Its subcellular location is the secreted. It carries out the reaction a ribonucleotidyl-ribonucleotide-RNA + H2O = a 3'-end 3'-phospho-ribonucleotide-RNA + a 5'-end dephospho-ribonucleoside-RNA + H(+). In terms of biological role, endoribonuclease that cleaves single-stranded RNAs; unlike its paralog EndoU it does not appear to preferentially cleave at uridylates and releases linear products instead of products that have 2'-3'-cyclic phosphate termini. Preferentially cleaves single stranded RNA at sites with AU, UC and poly-U sites cleaved less efficiently. Targets mRNAs encoding proteins involved in lipid metabolism, particularly those involved in lipolysis, to regulate their expression. In Drosophila melanogaster (Fruit fly), this protein is Endoribonuclease Arlr.